We begin with the raw amino-acid sequence, 380 residues long: DNA primase small subunit PriS (380 aa).

Catalysis depends on residues Asp101, Asp103, and Asp282.

It belongs to the eukaryotic-type primase small subunit family. Heterodimer of a small subunit (PriS) and a large subunit (PriL). It depends on Mg(2+) as a cofactor. The cofactor is Mn(2+).

Its function is as follows. Catalytic subunit of DNA primase, an RNA polymerase that catalyzes the synthesis of short RNA molecules used as primers for DNA polymerase during DNA replication. The small subunit contains the primase catalytic core and has DNA synthesis activity on its own. Binding to the large subunit stabilizes and modulates the activity, increasing the rate of DNA synthesis while decreasing the length of the DNA fragments, and conferring RNA synthesis capability. The DNA polymerase activity may enable DNA primase to also catalyze primer extension after primer synthesis. May also play a role in DNA repair. This is DNA primase small subunit PriS from Hyperthermus butylicus (strain DSM 5456 / JCM 9403 / PLM1-5).